A 298-amino-acid chain; its full sequence is Heterogeneous nuclear ribonucleoprotein C (298 aa).

The residue at position 2 (Ala2) is an N-acetylalanine. Glycyl lysine isopeptide (Lys-Gly) (interchain with G-Cter in SUMO2) cross-links involve residues Lys8, Lys50, Lys89, and Lys94. Residues 16-87 (SRVFIGNLNT…QVLDINLAAE (72 aa)) form the RRM domain. Ser108 is modified (phosphoserine). 2 disordered regions span residues 131–177 (PPPP…VKGD) and 204–298 (EKEQ…EDDS). The short motif at 142–148 (PSKRQRV) is the Nuclear localization signal element. Phosphoserine is present on residues Ser149 and Ser153. Residues 162-173 (SKSGQRGSSSKS) are compositionally biased toward low complexity. At Lys163 the chain carries N6-acetyllysine; alternate. A Glycyl lysine isopeptide (Lys-Gly) (interchain with G-Cter in SUMO2); alternate cross-link involves residue Lys163. Residues 176 to 211 (GDDLQAIKKELTQIKQKVDSLLESLEKIEKEQSKQA) adopt a coiled-coil conformation. Residue Lys209 forms a Glycyl lysine isopeptide (Lys-Gly) (interchain with G-Cter in SUMO2) linkage. 3 positions are modified to phosphoserine: Ser214, Ser216, and Ser217. Lys222 participates in a covalent cross-link: Glycyl lysine isopeptide (Lys-Gly) (interchain with G-Cter in SUMO2). Lys225 is covalently cross-linked (Glycyl lysine isopeptide (Lys-Gly) (interchain with G-Cter in SUMO2); alternate). Lys225 participates in a covalent cross-link: Glycyl lysine isopeptide (Lys-Gly) (interchain with G-Cter in SUMO1); alternate. Residues Ser226, Ser231, Ser232, and Ser234 each carry the phosphoserine modification. A compositionally biased stretch (basic and acidic residues) spans 235–246 (VKKDETNVKMES). Residues Lys236 and Lys237 each participate in a glycyl lysine isopeptide (Lys-Gly) (interchain with G-Cter in SUMO2) cross-link. Lys243 is covalently cross-linked (Glycyl lysine isopeptide (Lys-Gly) (interchain with G-Cter in SUMO2); alternate). Residue Lys243 forms a Glycyl lysine isopeptide (Lys-Gly) (interchain with G-Cter in SUMO); alternate linkage. Ser246 and Ser253 each carry phosphoserine. The segment covering 248-269 (AGADDSAEEGDLLDDDDNEDRG) has biased composition (acidic residues). Basic and acidic residues predominate over residues 270-279 (DDQLELKDDE). The segment covering 280–298 (KEPEEGEDDRDSANGEDDS) has biased composition (acidic residues). Residues Ser291 and Ser298 each carry the phosphoserine modification.

Belongs to the RRM HNRPC family. RALY subfamily. In terms of assembly, tetramer composed of 3 copies of isoform C1 and 1 copy of isoform C2. Assembly of 3 tetramers with bound pre-mRNA gives rise to a 19S complex that interacts with HNRNPA2B1 tetramers. Component of the 40S hnRNP particle. Identified in the spliceosome C complex. Interacts with IGF2BP1. Interacts with PPIA/CYPA. Phosphorylated on Ser-253 and Ser-291 in resting cells. Post-translationally, sumoylated. Sumoylation reduces affinity for mRNA. In terms of processing, ubiquitinated and degraded after nucleo-cytoplasmic transport by YWHAE.

The protein localises to the nucleus. Binds pre-mRNA and nucleates the assembly of 40S hnRNP particles. Interacts with poly-U tracts in the 3'-UTR or 5'-UTR of mRNA and modulates the stability and the level of translation of bound mRNA molecules. Single HNRNPC tetramers bind 230-240 nucleotides. Trimers of HNRNPC tetramers bind 700 nucleotides. May play a role in the early steps of spliceosome assembly and pre-mRNA splicing. N6-methyladenosine (m6A) has been shown to alter the local structure in mRNAs and long non-coding RNAs (lncRNAs) via a mechanism named 'm(6)A-switch', facilitating binding of HNRNPC, leading to regulation of mRNA splicing. This is Heterogeneous nuclear ribonucleoprotein C from Rattus norvegicus (Rat).